The following is a 134-amino-acid chain: Profilin (134 aa).

It belongs to the profilin family. Interacts with host Tpm1. Interacts with protein A25.

It localises to the host cytoplasm. In terms of biological role, participates in either intracellular transport of viral proteins or intercellular spread of the virus. Cellular profilins modulate actin filament dynamics (polymerization and depolymerization) via direct binding to actin through an actin-binding domain as well as by modulation of other actin-binding proteins. In contrast to cellular homologs, the poxvirus profilins seem to bind actin only weakly. The sequence is that of Profilin from Ectromelia virus (strain Moscow) (ECTV).